Consider the following 115-residue polypeptide: Large ribosomal subunit protein uL22 (115 aa).

The protein belongs to the universal ribosomal protein uL22 family. As to quaternary structure, part of the 50S ribosomal subunit.

In terms of biological role, this protein binds specifically to 23S rRNA; its binding is stimulated by other ribosomal proteins, e.g. L4, L17, and L20. It is important during the early stages of 50S assembly. It makes multiple contacts with different domains of the 23S rRNA in the assembled 50S subunit and ribosome. Its function is as follows. The globular domain of the protein is located near the polypeptide exit tunnel on the outside of the subunit, while an extended beta-hairpin is found that lines the wall of the exit tunnel in the center of the 70S ribosome. This Thioalkalivibrio sulfidiphilus (strain HL-EbGR7) protein is Large ribosomal subunit protein uL22.